The primary structure comprises 518 residues: WEB family protein At2g40480 (518 aa).

Coiled-coil stretches lie at residues 95 to 141 (DIKR…LQQE) and 188 to 219 (DNLV…AKLT). A disordered region spans residues 303-337 (NGESQDDDSEFCFPEPPRSPVTPRGLRIDNDFSTD). Over residues 328–337 (LRIDNDFSTD) the composition is skewed to basic and acidic residues. Residues 344–375 (ILKKLEEATEGVKQSKQALEAALNRVEIANVK) are a coiled coil.

The protein belongs to the WEB family.

The chain is WEB family protein At2g40480 from Arabidopsis thaliana (Mouse-ear cress).